The sequence spans 217 residues: Peroxiredoxin (217 aa).

Positions 2-159 (PVIGEKFPEV…IVRLVKALQV (158 aa)) constitute a Thioredoxin domain. The active-site Cysteine sulfenic acid (-SOH) intermediate is the Cys46. Position 122 (Arg122) interacts with substrate. A disulfide bridge connects residues Cys206 and Cys212.

It belongs to the peroxiredoxin family. Prx6 subfamily. In terms of assembly, homodecamer. Pentamer of dimers that assemble into a ring structure.

It localises to the cytoplasm. It catalyses the reaction a hydroperoxide + [thioredoxin]-dithiol = an alcohol + [thioredoxin]-disulfide + H2O. Thiol-specific peroxidase that catalyzes the reduction of hydrogen peroxide and organic hydroperoxides to water and alcohols, respectively. Plays a role in cell protection against oxidative stress by detoxifying peroxides. This chain is Peroxiredoxin, found in Methanocaldococcus jannaschii (strain ATCC 43067 / DSM 2661 / JAL-1 / JCM 10045 / NBRC 100440) (Methanococcus jannaschii).